We begin with the raw amino-acid sequence, 215 residues long: Heart- and neural crest derivatives-expressed protein 1 (215 aa).

Disordered regions lie at residues 53 to 109 and 169 to 202; these read APDF…RTES and VDGG…KGRT. The segment covering 65 to 75 has biased composition (low complexity); it reads AAAAAATYGPD. Residues 92 to 104 are compositionally biased toward basic residues; the sequence is LGRRKGSGPKKER. One can recognise a bHLH domain in the interval 94 to 146; that stretch reads RRKGSGPKKERRRTESINSAFAELRECIPNVPADTKLSKIKTLRLATSYIAYL. Threonine 107 bears the Phosphothreonine; by PLK4 mark. Position 109 is a phosphoserine; by PLK4 (serine 109).

In terms of assembly, efficient DNA binding requires dimerization with another bHLH protein. Forms homodimers and heterodimers with TCF3 gene products E12 and E47, HAND2 and HEY1, HEY2 and HEYL (hairy-related transcription factors). Interacts with MDFIC. Interacts with SOX15; the interaction enhances HAND1-induced differentiation of trophoblast giant cells. Phosphorylation by PLK4 disrupts the interaction with MDFIC and leads to translocation into the nucleoplasm, allowing dimerization and transcription factor activity.

The protein localises to the nucleus. Its subcellular location is the nucleoplasm. It is found in the nucleolus. Its function is as follows. Transcription factor that plays an essential role in both trophoblast giant cell differentiation and in cardiac morphogenesis. Binds the DNA sequence 5'-NRTCTG-3' (non-canonical E-box). Acts as a transcriptional repressor of SOX15. In the adult, could be required for ongoing expression of cardiac-specific genes. In Oryctolagus cuniculus (Rabbit), this protein is Heart- and neural crest derivatives-expressed protein 1 (HAND1).